The sequence spans 207 residues: Cytochrome c biogenesis ATP-binding export protein CcmA (207 aa).

Positions 4–207 constitute an ABC transporter domain; it reads LEVRELLCER…RISLTQTRAV (204 aa). ATP is bound at residue 36-43; sequence GSNGAGKT.

It belongs to the ABC transporter superfamily. CcmA exporter (TC 3.A.1.107) family. As to quaternary structure, the complex is composed of two ATP-binding proteins (CcmA) and two transmembrane proteins (CcmB).

It localises to the cell inner membrane. It carries out the reaction heme b(in) + ATP + H2O = heme b(out) + ADP + phosphate + H(+). In terms of biological role, part of the ABC transporter complex CcmAB involved in the biogenesis of c-type cytochromes; once thought to export heme, this seems not to be the case, but its exact role is uncertain. Responsible for energy coupling to the transport system. This chain is Cytochrome c biogenesis ATP-binding export protein CcmA, found in Escherichia coli O157:H7.